The chain runs to 1003 residues: Methyl-CpG-binding domain protein 6 (1003 aa).

The 71-residue stretch at alanine 13–proline 83 folds into the MBD domain. The tract at residues aspartate 59–leucine 70 is required for interaction with ASXL1/2/3. Disordered regions lie at residues cysteine 123 to alanine 222, valine 241 to histidine 302, alanine 334 to proline 619, alanine 631 to aspartate 659, alanine 684 to leucine 736, and serine 753 to proline 1003. Pro residues-rich tracts occupy residues proline 142–threonine 157 and glutamine 168–valine 196. Over residues histidine 252–proline 262 the composition is skewed to low complexity. Residues proline 273–glutamine 293 show a composition bias toward pro residues. A compositionally biased stretch (low complexity) spans alanine 351 to proline 363. Over residues alanine 393–proline 409 the composition is skewed to pro residues. Positions isoleucine 410–serine 428 are enriched in low complexity. Residues leucine 441 to proline 458 show a composition bias toward pro residues. Composition is skewed to low complexity over residues serine 462 to glycine 500 and glycine 533 to glycine 550. The segment covering glutamine 571–proline 590 has biased composition (pro residues). Low complexity predominate over residues glycine 591 to leucine 604. Over residues serine 605–proline 618 the composition is skewed to pro residues. Over residues alanine 636–asparagine 650 the composition is skewed to gly residues. Positions threonine 708–glycine 719 are enriched in polar residues. A compositionally biased stretch (low complexity) spans leucine 768 to leucine 798. The segment covering proline 805–serine 817 has biased composition (pro residues). Over residues proline 818–proline 837 the composition is skewed to low complexity. A compositionally biased stretch (basic residues) spans arginine 947 to asparagine 958. Over residues alanine 960 to aspartate 969 the composition is skewed to polar residues. Positions arginine 989–proline 1003 are enriched in basic residues.

In terms of assembly, core component of the polycomb repressive deubiquitinase (PR-DUB) complex, at least composed of BAP1, one of ASXL1, ASXL2 or (probably) ASXL3, and one of MBD5 or MBD6. Distinct combinations of ASXL and MBD proteins may preferentially bind specific histone modification marks. The PR-DUB core associates with a number of accessory proteins, including FOXK1, FOXK2, KDM1B, HCFC1 and OGT; KDM1B specifically associates with ASXL2 PR-DUB complexes. Interacts (via MBD domain) with ASXL1, ASXL2 and ASXL3 (via PHD domain); the interaction is probably direct, mediates association with other PR-DUB complex core components. As to expression, expressed at highest levels in adult testis.

Its subcellular location is the nucleus. It localises to the chromosome. Its function is as follows. Non-catalytic component of the polycomb repressive deubiquitinase (PR-DUB) complex, a complex that specifically mediates deubiquitination of histone H2A monoubiquitinated at 'Lys-120' (H2AK119ub1). Important for stability of PR-DUB components and stimulating its ubiquitinase activity. As part of the PR-DUB complex, associates with chromatin enriched in histone marks H3K4me1, H3K4me3, and H3K27Ac, but not in H3K27me3. MBD5 and MBD6 containing complexes associate with distinct chromatin regions enriched in genes involved in different pathways. Heterochromatin recruitment is not mediated by DNA methylation. The PR-DUB complex is an epigenetic regulator of gene expression, including genes involved in development, cell communication, signaling, cell proliferation and cell viability; may promote cancer cell growth. This chain is Methyl-CpG-binding domain protein 6 (Mbd6), found in Mus musculus (Mouse).